The sequence spans 339 residues: Ferredoxin--NADP reductase (339 aa).

FAD-binding residues include E35, Q43, Y48, V88, F122, D287, and S327.

Belongs to the ferredoxin--NADP reductase type 2 family. Homodimer. FAD is required as a cofactor.

The enzyme catalyses 2 reduced [2Fe-2S]-[ferredoxin] + NADP(+) + H(+) = 2 oxidized [2Fe-2S]-[ferredoxin] + NADPH. The chain is Ferredoxin--NADP reductase from Leuconostoc citreum (strain KM20).